A 398-amino-acid chain; its full sequence is 1-deoxy-D-xylulose 5-phosphate reductoisomerase (398 aa).

Thr-10, Gly-11, Ser-12, Ile-13, Asn-38, and Asn-124 together coordinate NADPH. Lys-125 is a 1-deoxy-D-xylulose 5-phosphate binding site. NADPH is bound at residue Glu-126. Residue Asp-150 participates in Mn(2+) binding. Ser-151, Glu-152, Ser-176, and His-199 together coordinate 1-deoxy-D-xylulose 5-phosphate. Position 152 (Glu-152) interacts with Mn(2+). Gly-205 contacts NADPH. 4 residues coordinate 1-deoxy-D-xylulose 5-phosphate: Ser-212, Asn-217, Lys-218, and Glu-221. Glu-221 is a binding site for Mn(2+).

The protein belongs to the DXR family. The cofactor is Mg(2+). Mn(2+) is required as a cofactor.

It carries out the reaction 2-C-methyl-D-erythritol 4-phosphate + NADP(+) = 1-deoxy-D-xylulose 5-phosphate + NADPH + H(+). It participates in isoprenoid biosynthesis; isopentenyl diphosphate biosynthesis via DXP pathway; isopentenyl diphosphate from 1-deoxy-D-xylulose 5-phosphate: step 1/6. In terms of biological role, catalyzes the NADPH-dependent rearrangement and reduction of 1-deoxy-D-xylulose-5-phosphate (DXP) to 2-C-methyl-D-erythritol 4-phosphate (MEP). The protein is 1-deoxy-D-xylulose 5-phosphate reductoisomerase of Crocosphaera subtropica (strain ATCC 51142 / BH68) (Cyanothece sp. (strain ATCC 51142)).